Here is a 519-residue protein sequence, read N- to C-terminus: Glutamate--cysteine ligase (519 aa).

Belongs to the glutamate--cysteine ligase type 1 family. Type 1 subfamily.

It catalyses the reaction L-cysteine + L-glutamate + ATP = gamma-L-glutamyl-L-cysteine + ADP + phosphate + H(+). The protein operates within sulfur metabolism; glutathione biosynthesis; glutathione from L-cysteine and L-glutamate: step 1/2. The chain is Glutamate--cysteine ligase from Erwinia tasmaniensis (strain DSM 17950 / CFBP 7177 / CIP 109463 / NCPPB 4357 / Et1/99).